The chain runs to 78 residues: Protein Class8-like (78 aa).

Positions 1–19 (MRTLVVLLIGAVLLCSANA) are cleaved as a signal peptide. A propeptide spanning residues 20 to 36 (FLDELLAESVNDMTDKR) is cleaved from the precursor. A ShKT domain is found at 38-78 (CFDKYKSNICGGVISPAHCVRRSGRMAKFAKENCAHFCGFC). Cystine bridges form between cysteine 38/cysteine 78, cysteine 47/cysteine 71, and cysteine 56/cysteine 75.

In terms of tissue distribution, expressed in ganglion neurons residing in the mesoglea (observed in both planulae and primary polyps). Not expressed in nematocytes.

Its function is as follows. Probable neuropeptide. In Nematostella vectensis (Starlet sea anemone), this protein is Protein Class8-like.